Reading from the N-terminus, the 319-residue chain is Ribosomal RNA small subunit methyltransferase H (319 aa).

S-adenosyl-L-methionine contacts are provided by residues 39–41 (GGH), aspartate 59, phenylalanine 83, aspartate 104, and glutamine 111.

It belongs to the methyltransferase superfamily. RsmH family.

It localises to the cytoplasm. It catalyses the reaction cytidine(1402) in 16S rRNA + S-adenosyl-L-methionine = N(4)-methylcytidine(1402) in 16S rRNA + S-adenosyl-L-homocysteine + H(+). Its function is as follows. Specifically methylates the N4 position of cytidine in position 1402 (C1402) of 16S rRNA. The polypeptide is Ribosomal RNA small subunit methyltransferase H (Ralstonia pickettii (strain 12J)).